We begin with the raw amino-acid sequence, 147 residues long: Large ribosomal subunit protein uL13 (147 aa).

The protein belongs to the universal ribosomal protein uL13 family. As to quaternary structure, part of the 50S ribosomal subunit.

Functionally, this protein is one of the early assembly proteins of the 50S ribosomal subunit, although it is not seen to bind rRNA by itself. It is important during the early stages of 50S assembly. This chain is Large ribosomal subunit protein uL13, found in Salinispora arenicola (strain CNS-205).